A 249-amino-acid polypeptide reads, in one-letter code: Methyl-coenzyme M reductase I subunit gamma (249 aa).

Arginine 120 lines the coenzyme M pocket.

This sequence belongs to the methyl-coenzyme M reductase gamma subunit family. In terms of assembly, MCR is a hexamer of two alpha, two beta, and two gamma chains, forming a dimer of heterotrimers. Requires coenzyme F430 as cofactor.

Its subcellular location is the cytoplasm. It carries out the reaction coenzyme B + methyl-coenzyme M = methane + coenzyme M-coenzyme B heterodisulfide. It functions in the pathway one-carbon metabolism; methyl-coenzyme M reduction; methane from methyl-coenzyme M: step 1/1. In terms of biological role, component of the methyl-coenzyme M reductase (MCR) I that catalyzes the reductive cleavage of methyl-coenzyme M (CoM-S-CH3 or 2-(methylthio)ethanesulfonate) using coenzyme B (CoB or 7-mercaptoheptanoylthreonine phosphate) as reductant which results in the production of methane and the mixed heterodisulfide of CoB and CoM (CoM-S-S-CoB). This is the final step in methanogenesis. The chain is Methyl-coenzyme M reductase I subunit gamma (mcrG) from Methanothermobacter thermautotrophicus (strain ATCC 29096 / DSM 1053 / JCM 10044 / NBRC 100330 / Delta H) (Methanobacterium thermoautotrophicum).